The sequence spans 256 residues: Small ribosomal subunit protein eS1 (256 aa).

At A2 the chain carries N-acetylalanine; partial.

The protein belongs to the eukaryotic ribosomal protein eS1 family. In terms of assembly, component of the small ribosomal subunit. Mature ribosomes consist of a small (40S) and a large (60S) subunit. The 40S subunit contains about 33 different proteins and 1 molecule of RNA (18S). The 60S subunit contains about 49 different proteins and 3 molecules of RNA (25S, 5.8S and 5S).

The protein resides in the cytoplasm. The sequence is that of Small ribosomal subunit protein eS1 from Candida albicans (strain SC5314 / ATCC MYA-2876) (Yeast).